Reading from the N-terminus, the 269-residue chain is Phosphatidate cytidylyltransferase (269 aa).

8 consecutive transmembrane segments (helical) span residues 13–33, 50–70, 81–101, 110–130, 138–158, 180–200, 201–221, and 247–267; these read LAAI…TILI, LKLV…FLLP, ISKM…TVLV, VGFI…FIEI, LTYI…AYFV, FAGG…VAQL, PIPY…GQLG, and ILDR…LLAL.

Belongs to the CDS family.

It localises to the cell membrane. The catalysed reaction is a 1,2-diacyl-sn-glycero-3-phosphate + CTP + H(+) = a CDP-1,2-diacyl-sn-glycerol + diphosphate. Its pathway is phospholipid metabolism; CDP-diacylglycerol biosynthesis; CDP-diacylglycerol from sn-glycerol 3-phosphate: step 3/3. The chain is Phosphatidate cytidylyltransferase (cdsA) from Bacillus subtilis (strain 168).